The chain runs to 232 residues: MNTITLTARPEALTFAPEQSALIVVDMQNAYASQGGYLDLAGFDVSSTAPVIENIKTAVAAAREAGMTIVWFQNGWDSDYLEAGGPGSPNFHKSNALKTMRRCPELHGKLLAKGGWDYQLVDELTPLPGDIVLPKPRYSGFFNTPLDSMLRARNIRHLVFTGIATNVCVESTLRDGFFLEYFGVVLEDATHQAGPPFAQQAALFNIETFFGWVSDVQSFCDALSPEALARIA.

Asp-26 acts as the Proton acceptor in catalysis. The active site involves Lys-135. Cys-168 functions as the Nucleophile in the catalytic mechanism.

Belongs to the isochorismatase family. RutB subfamily.

The enzyme catalyses (Z)-3-ureidoacrylate + H2O + H(+) = (Z)-3-aminoacrylate + NH4(+) + CO2. The catalysed reaction is (Z)-3-ureidoacrylate + H2O = (Z)-3-aminoacrylate + carbamate + H(+). It catalyses the reaction (Z)-2-methylureidoacrylate + H2O + H(+) = (Z)-2-methylaminoacrylate + NH4(+) + CO2. In terms of biological role, hydrolyzes ureidoacrylate to form aminoacrylate and carbamate. The carbamate hydrolyzes spontaneously, thereby releasing one of the nitrogen atoms of the pyrimidine ring as ammonia and one of its carbon atoms as CO2. The sequence is that of Ureidoacrylate amidohydrolase RutB from Cronobacter sakazakii (strain ATCC BAA-894) (Enterobacter sakazakii).